The chain runs to 599 residues: Putative fused cobalt transport protein CbiMQ (599 aa).

Residues 1–239 form a cbiM region; the sequence is MHIMEGFLPS…LLPSSDQNLS (239 aa). 16 helical membrane passes run 12–32, 44–64, 74–94, 106–126, 140–160, 162–182, 183–203, 247–267, 303–323, 356–376, 377–397, 407–427, 438–458, 463–483, 493–513, and 579–599; these read WWQF…AALI, LLGL…PSVG, FGAI…VLVF, TLGA…CIIF, SFSV…YMMT, LQLA…FVVY, LGIF…LIVL, IIAG…LAGL, WLFA…LYLL, QVSA…GVTS, PLPY…LIIA, LLTI…LITG, IGAF…LVLS, GMCS…FSVL, IDLS…AIAI, and MAVF…MLLL. Residues 341-599 form a cbiQ region; it reads DEHILDDVAI…GLLCAEMLLL (259 aa).

This sequence in the N-terminal section; belongs to the CbiM family. It in the C-terminal section; belongs to the CbiQ family. In terms of assembly, forms an energy-coupling factor (ECF) transporter complex composed of an ATP-binding protein (A component, CbiO), a transmembrane protein (T component, CbiQ) and 2 possible substrate-capture proteins (S components, CbiM and CbiN) of unknown stoichimetry.

It localises to the cell membrane. It functions in the pathway cofactor biosynthesis; adenosylcobalamin biosynthesis. Its function is as follows. Part of the energy-coupling factor (ECF) transporter complex CbiMNOQ involved in cobalt import. In Methanocorpusculum labreanum (strain ATCC 43576 / DSM 4855 / Z), this protein is Putative fused cobalt transport protein CbiMQ (cbiMQ).